The following is a 239-amino-acid chain: MTPPNDARITLMNYDDPLEWAQSVTRELENILLQEITQRGRASLLLSGGTTPARVYETLATRPLDWSKIDIGLVDERWLSPQDKDSNAWLVRHTLLEHAKHATFLPLIRPGKTLNQCVHDANLQITHSPPPCAAVLGMGNDGHTASLFPGSLDLPKAISTLQPYVALDATGCPGAGVWPLRITLTPAGLSNIPHRLLLLCGKQKMQVLETALSCKDALDYPIRTAIDLPNARLRVHWCA.

This sequence belongs to the glucosamine/galactosamine-6-phosphate isomerase family. 6-phosphogluconolactonase subfamily.

The catalysed reaction is 6-phospho-D-glucono-1,5-lactone + H2O = 6-phospho-D-gluconate + H(+). It functions in the pathway carbohydrate degradation; pentose phosphate pathway; D-ribulose 5-phosphate from D-glucose 6-phosphate (oxidative stage): step 2/3. Functionally, hydrolysis of 6-phosphogluconolactone to 6-phosphogluconate. The polypeptide is 6-phosphogluconolactonase (pgl) (Xylella fastidiosa (strain 9a5c)).